The chain runs to 431 residues: Enolase (431 aa).

Residue Q166 coordinates (2R)-2-phosphoglycerate. Catalysis depends on E208, which acts as the Proton donor. Positions 245, 288, and 315 each coordinate Mg(2+). The (2R)-2-phosphoglycerate site is built by K340, R369, S370, and K391. K340 functions as the Proton acceptor in the catalytic mechanism.

This sequence belongs to the enolase family. Requires Mg(2+) as cofactor.

Its subcellular location is the cytoplasm. It is found in the secreted. The protein localises to the cell surface. The enzyme catalyses (2R)-2-phosphoglycerate = phosphoenolpyruvate + H2O. Its pathway is carbohydrate degradation; glycolysis; pyruvate from D-glyceraldehyde 3-phosphate: step 4/5. In terms of biological role, catalyzes the reversible conversion of 2-phosphoglycerate (2-PG) into phosphoenolpyruvate (PEP). It is essential for the degradation of carbohydrates via glycolysis. The sequence is that of Enolase from Clostridium botulinum (strain Kyoto / Type A2).